The primary structure comprises 415 residues: Probable glucuronosyltransferase Os01g0926600 (415 aa).

Over 1–4 (MAMR) the chain is Cytoplasmic. A helical; Signal-anchor for type II membrane protein membrane pass occupies residues 5-25 (LSSAAVALALLLAATALEDVA). Residues 26-415 (RGQDTERIEG…QGPVGDLKPW (390 aa)) are Lumenal-facing. N142 and N403 each carry an N-linked (GlcNAc...) asparagine glycan.

This sequence belongs to the glycosyltransferase 47 family.

It localises to the golgi apparatus membrane. Its function is as follows. Involved in the synthesis of glucuronoxylan hemicellulose in secondary cell walls. In Oryza sativa subsp. japonica (Rice), this protein is Probable glucuronosyltransferase Os01g0926600.